The following is a 450-amino-acid chain: MREIVHVQAGQCGNQIGSKFWEVISDEHGIQPDGTFKGETDLQLERIDVYYNEANNGKYVPRAVLVDLEPGTMDSVRSGPFGQLFRPDNFVFGQSGAGNNWAKGHYTEGAELVDNVLDVIRKEAEGCDCLQGFQLTHSLGGGTGSGMGTLLISKIREEYPDRIMSSFSVVPSPKVSDTVVEPYNATLSVHQLVENTDETYCIDNEALYDICYRTLKLTNPTYGDLNHLVSLTMSGVTTCLRFPGQLNADLRKLAVNMVPFPRLHFFMPGFAPLSAKGTQAYRALTVAELTQQMFDAKNMMAACDPRHGRYLTVAAMFRGRMSMREVDEQMLNVQNKNSSYFVEWIPNNVKTAVCDIPPRGLKMAATFVGNSTAIQELFKRISEQFTAMFRRKAFLHWYTGEGMDEMEFTEAESNMNDLISEYQQYQEATAEDDVDGYAEGEAGETYESEQ.

GTP contacts are provided by Gln11, Glu69, Ser138, Gly142, Thr143, Gly144, Asn204, and Asn226. A Mg(2+)-binding site is contributed by Glu69. The interval 428 to 450 (ATAEDDVDGYAEGEAGETYESEQ) is disordered. The segment covering 429-450 (TAEDDVDGYAEGEAGETYESEQ) has biased composition (acidic residues).

It belongs to the tubulin family. In terms of assembly, dimer of alpha and beta chains. A typical microtubule is a hollow water-filled tube with an outer diameter of 25 nm and an inner diameter of 15 nm. Alpha-beta heterodimers associate head-to-tail to form protofilaments running lengthwise along the microtubule wall with the beta-tubulin subunit facing the microtubule plus end conferring a structural polarity. Microtubules usually have 13 protofilaments but different protofilament numbers can be found in some organisms and specialized cells. Mg(2+) serves as cofactor. Post-translationally, cleaved by caspase ced-3 in vitro.

The protein resides in the cytoplasm. It localises to the cytoskeleton. Tubulin is the major constituent of microtubules, a cylinder consisting of laterally associated linear protofilaments composed of alpha- and beta-tubulin heterodimers. Microtubules grow by the addition of GTP-tubulin dimers to the microtubule end, where a stabilizing cap forms. Below the cap, tubulin dimers are in GDP-bound state, owing to GTPase activity of alpha-tubulin. Required for the normal dynamic behavior of the non-centrosomal microtubules in the epidermal syncytium. Involved in the redistribution of microtubule end-binding protein EB1/ebp-2 caused by wounding. Required to modulate expression in the epidermis of antimicrobial peptides, such as nlp-29, after wounding, or fungal infection. The polypeptide is Tubulin beta-2 chain (tbb-2) (Caenorhabditis elegans).